The chain runs to 304 residues: Acetylglutamate kinase (304 aa).

Substrate contacts are provided by residues 77–78, Arg99, and Asn193; that span reads GG.

Belongs to the acetylglutamate kinase family. ArgB subfamily.

It localises to the cytoplasm. It catalyses the reaction N-acetyl-L-glutamate + ATP = N-acetyl-L-glutamyl 5-phosphate + ADP. The protein operates within amino-acid biosynthesis; L-arginine biosynthesis; N(2)-acetyl-L-ornithine from L-glutamate: step 2/4. In terms of biological role, catalyzes the ATP-dependent phosphorylation of N-acetyl-L-glutamate. The polypeptide is Acetylglutamate kinase (Chlorobium limicola (strain DSM 245 / NBRC 103803 / 6330)).